Reading from the N-terminus, the 215-residue chain is MSDNAQLSGLCDRFRGFYPVVIDVETAGFNAKTDALLEVAAITLKMDEQGWLMPDTTLHFHVEPFEGANLQPEALAFNGIDPSNPLRGAVSEYDALHAIFKMVRKGIKDSGCNRAIMVAHNATFDHSFMMAAAERASLKRNPFHPFVTFDTAALSGLALGQTVLSKACLAAGMEFDGTQAHSALYDTERTAVLFCEIVNRWKRLGGWPLPVPEEA.

The region spanning 20-194 is the Exonuclease domain; that stretch reads VVIDVETAGF…YDTERTAVLF (175 aa). Mg(2+) contacts are provided by D23, E25, H181, and D186. The Proton donor/acceptor role is filled by H181.

The protein belongs to the RNase T family. Homodimer. It depends on Mg(2+) as a cofactor.

Its function is as follows. Trims short 3' overhangs of a variety of RNA species, leaving a one or two nucleotide 3' overhang. Responsible for the end-turnover of tRNA: specifically removes the terminal AMP residue from uncharged tRNA (tRNA-C-C-A). Also appears to be involved in tRNA biosynthesis. The chain is Ribonuclease T from Citrobacter koseri (strain ATCC BAA-895 / CDC 4225-83 / SGSC4696).